The sequence spans 401 residues: MKDKVVLAYSGGLDTSIIIPWLKENYDLDVIAACIDVGQDDDMEAVRNKAIKTGAVKVYIEDVKEEFVRDYLFSAVKAHILYEDAYLLGTSLARPLMAKRLVEIAHAEGAKYIAHGCTGKGNDQVRFEVGVASFDPKLGIIAPWRIWDIKSREDAIDYANSKGVEVPVTKEKIYSNDKNIWHVSHEGGDLEDPKNEHKSSMYFMTTPPEKAKDEVSYVELYFEQGIPKKLDGKELPPVEMMQTLNKLGGENGIGIVDMVENRLVGMKSRGVYETPGGTILYAAHAALERLTIDKNTAHYKQMISQKYGELVYDGLWFSPLKEALDAFVEVTQKNVTGSVKLKLYKGNVMVAGVDAPYALYDEDISSFGASELYDHKDAEGFIKIFSLPYKIKAMIEKEKGN.

8-16 (AYSGGLDTS) is an ATP binding site. Y86 and S91 together coordinate L-citrulline. Residue G116 coordinates ATP. 3 residues coordinate L-aspartate: T118, N122, and D123. L-citrulline is bound at residue N122. 5 residues coordinate L-citrulline: R126, S175, S184, E260, and Y272.

It belongs to the argininosuccinate synthase family. Type 1 subfamily. Homotetramer.

Its subcellular location is the cytoplasm. It catalyses the reaction L-citrulline + L-aspartate + ATP = 2-(N(omega)-L-arginino)succinate + AMP + diphosphate + H(+). It participates in amino-acid biosynthesis; L-arginine biosynthesis; L-arginine from L-ornithine and carbamoyl phosphate: step 2/3. This chain is Argininosuccinate synthase, found in Clostridium kluyveri (strain ATCC 8527 / DSM 555 / NBRC 12016 / NCIMB 10680 / K1).